Consider the following 77-residue polypeptide: Omega-conotoxin TxVII (77 aa).

Positions 1 to 22 are cleaved as a signal peptide; that stretch reads MKLTCMMIVAVLFLTAWTFATA. Positions 23–49 are excised as a propeptide; the sequence is DDSGNGLENLFPKAHHEMKNPEASKLN. Intrachain disulfides connect Cys52/Cys67, Cys59/Cys71, and Cys66/Cys75.

In terms of tissue distribution, expressed by the venom duct.

The protein resides in the secreted. Its function is as follows. Omega-conotoxins act at presynaptic membranes, they bind and block voltage-gated calcium channels (Cav). Specifically acts on L-type channels. It blocks molluscan dihydropyridine-sensitive calcium channels. This Conus textile (Cloth-of-gold cone) protein is Omega-conotoxin TxVII.